Reading from the N-terminus, the 158-residue chain is Ankyrin repeat domain-containing protein 37 (158 aa).

3 ANK repeats span residues 1 to 25 (MLLL…SVNA), 30 to 59 (CKQS…DLNQ), and 63 to 92 (LGEA…QIDL). The Nuclear localization signal signature appears at 129-149 (EHPDRNDCVAVLRQKRSLGSV).

Ubiquitinated by the CRL2(FEM1B) complex, leading to its degradation. As to expression, mainly expressed in testis, small intestine, colon, blood leukocytes and in pancreatic adenocarcinoma cells.

The protein localises to the nucleus. It is found in the cytoplasm. This is Ankyrin repeat domain-containing protein 37 from Homo sapiens (Human).